Consider the following 206-residue polypeptide: Elongation factor Ts (206 aa).

Residues 81–84 (TDFV) are involved in Mg(2+) ion dislocation from EF-Tu.

This sequence belongs to the EF-Ts family.

It is found in the cytoplasm. Associates with the EF-Tu.GDP complex and induces the exchange of GDP to GTP. It remains bound to the aminoacyl-tRNA.EF-Tu.GTP complex up to the GTP hydrolysis stage on the ribosome. The protein is Elongation factor Ts of Maridesulfovibrio salexigens (strain ATCC 14822 / DSM 2638 / NCIMB 8403 / VKM B-1763) (Desulfovibrio salexigens).